The following is a 271-amino-acid chain: Phosphate import ATP-binding protein PstB 2 (271 aa).

The 242-residue stretch at methionine 25–isoleucine 266 folds into the ABC transporter domain. Glycine 57–serine 64 is a binding site for ATP.

This sequence belongs to the ABC transporter superfamily. Phosphate importer (TC 3.A.1.7) family. The complex is composed of two ATP-binding proteins (PstB), two transmembrane proteins (PstC and PstA) and a solute-binding protein (PstS).

It localises to the cell membrane. It catalyses the reaction phosphate(out) + ATP + H2O = ADP + 2 phosphate(in) + H(+). Functionally, part of the ABC transporter complex PstSACB involved in phosphate import. Responsible for energy coupling to the transport system. The sequence is that of Phosphate import ATP-binding protein PstB 2 from Listeria monocytogenes serovar 1/2a (strain ATCC BAA-679 / EGD-e).